Consider the following 321-residue polypeptide: MQILLANPRGFCAGVDRAISIVENALAIYGAPIYVRHEVVHNRYVVDSLRERGAIFIEQISEVPDGAILIFSAHGVSQAVRNEAKSRDLTVFDATCPLVTKVHMEVARASRRGEESILIGHAGHPEVEGTMGQYSNPEGGMYLVESPDDVWKLTVKNEEKLSFMTQTTLSVDDTSDVIDALRKRFPKIVGPRKDDICYATTNRQEAVRALAEQAEVVLVVGSKNSSNSNRLAELAQRMGKRAFLIDDATDIQEEWVKEAKCVGVTAGASAPDILVQNVVARLRSLAVAKPFRWKAAKKISFSKCRKSCESIFVKSIKSLAA.

A [4Fe-4S] cluster-binding site is contributed by Cys-12. (2E)-4-hydroxy-3-methylbut-2-enyl diphosphate contacts are provided by His-41 and His-74. His-41 and His-74 together coordinate dimethylallyl diphosphate. Positions 41 and 74 each coordinate isopentenyl diphosphate. Residue Cys-96 participates in [4Fe-4S] cluster binding. His-124 contacts (2E)-4-hydroxy-3-methylbut-2-enyl diphosphate. His-124 serves as a coordination point for dimethylallyl diphosphate. His-124 contacts isopentenyl diphosphate. Residue Glu-126 is the Proton donor of the active site. Thr-167 is a (2E)-4-hydroxy-3-methylbut-2-enyl diphosphate binding site. Cys-197 is a [4Fe-4S] cluster binding site. Positions 225, 226, 227, and 269 each coordinate (2E)-4-hydroxy-3-methylbut-2-enyl diphosphate. Residues Ser-225, Ser-226, Asn-227, and Ser-269 each contribute to the dimethylallyl diphosphate site. The isopentenyl diphosphate site is built by Ser-225, Ser-226, Asn-227, and Ser-269.

This sequence belongs to the IspH family. In terms of assembly, homodimer. It depends on [4Fe-4S] cluster as a cofactor.

It carries out the reaction isopentenyl diphosphate + 2 oxidized [2Fe-2S]-[ferredoxin] + H2O = (2E)-4-hydroxy-3-methylbut-2-enyl diphosphate + 2 reduced [2Fe-2S]-[ferredoxin] + 2 H(+). It catalyses the reaction dimethylallyl diphosphate + 2 oxidized [2Fe-2S]-[ferredoxin] + H2O = (2E)-4-hydroxy-3-methylbut-2-enyl diphosphate + 2 reduced [2Fe-2S]-[ferredoxin] + 2 H(+). It functions in the pathway isoprenoid biosynthesis; dimethylallyl diphosphate biosynthesis; dimethylallyl diphosphate from (2E)-4-hydroxy-3-methylbutenyl diphosphate: step 1/1. Its pathway is isoprenoid biosynthesis; isopentenyl diphosphate biosynthesis via DXP pathway; isopentenyl diphosphate from 1-deoxy-D-xylulose 5-phosphate: step 6/6. Catalyzes the conversion of 1-hydroxy-2-methyl-2-(E)-butenyl 4-diphosphate (HMBPP) into a mixture of isopentenyl diphosphate (IPP) and dimethylallyl diphosphate (DMAPP). Acts in the terminal step of the DOXP/MEP pathway for isoprenoid precursor biosynthesis. The polypeptide is 4-hydroxy-3-methylbut-2-enyl diphosphate reductase (Escherichia coli O6:K15:H31 (strain 536 / UPEC)).